A 408-amino-acid chain; its full sequence is MKQSALFEADDVEAISIDDVAFSLNVSSASVRNWIKTGYLHKATKNSVTAESFVAFKDEILGTEKLNQRANKSLKDQHDHSGLEEMIHNIIRSNEVHPEGLSDIYEESLSESYKNKEGVFYTPKEIAADFFDYLPKDCSELTFCDPCCGTGNFLIEAVKRGFKPCNIYGYDIDEVALEISRSRLKELCGVAESNIEKRDFLSASYQIEQKYDVIFTNPPWGKKLPKKDKDSLADSLATGNSKDTSAIFFFASMKILNSSGYLGFLLQDAFFNIASYESVRKAALANQIVALIDFGKPFKGLLTKAKGIILRKQCPDDQHATICVSGNTKNEVSQRVFEKNPKSIFNFTCSELDLEVVEHILSIPHKTLRGSARWGLGIVTGNNKKFCLPEARGGYIPVYKGSDITRKG.

The protein belongs to the N(4)/N(6)-methyltransferase family.

The enzyme catalyses a 2'-deoxyadenosine in DNA + S-adenosyl-L-methionine = an N(6)-methyl-2'-deoxyadenosine in DNA + S-adenosyl-L-homocysteine + H(+). Its function is as follows. A gamma subtype methylase, recognizes the double-stranded sequence 5'-ATTAAT-3', methylates A-5 on both strands, and protects the DNA from cleavage by the VspI endonuclease. The polypeptide is Type II methyltransferase M.VspI (Vibrio sp. (strain 343)).